A 655-amino-acid polypeptide reads, in one-letter code: Ankyrin repeat and SAM domain-containing protein 3 (655 aa).

The tract at residues M1 to S421 is interaction with NEK7. Residues S2 and S5 each carry the phosphoserine modification. 6 ANK repeats span residues D34–K64, G68–V97, E101–M130, H134–V163, Y168–T197, and S201–L220. N96 is modified (3-hydroxyasparagine). Phosphoserine occurs at positions 201, 225, 243, 244, and 245. The segment at Y314–P426 is disordered. Phosphothreonine is present on T318. 4 positions are modified to phosphoserine: S319, S366, S369, and S373. A compositionally biased stretch (basic residues) spans K378–H395. The SAM domain occupies S424–S487. Residues A500–A575 are a coiled coil. At S540 the chain carries Phosphoserine.

In terms of assembly, homooligomer. Interacts (via SAM domain) with ANKS6 (via SAM domain). Interacts with BICC1. Interacts with NPHP1. Interacts with NEK8. Interacts with HIF1AN. Interacts with NEK7; this interaction alters the subcellular distribution of NEK7 by preventing its nuclear translocation. Post-translationally, hydroxylated at Asn-96, most probably by HIF1AN. Phosphorylations at Ser-5, Ser-225, Thr-318, Ser-319, Ser-366 and Ser-369 occur in a NEK7-dependent manner. In terms of processing, polyubiquitinated. In terms of tissue distribution, kidney (at protein level).

The protein resides in the cell projection. Its subcellular location is the cilium. The protein localises to the cytoplasm. Functionally, may be involved in vasopressin signaling in the kidney. The sequence is that of Ankyrin repeat and SAM domain-containing protein 3 (Anks3) from Mus musculus (Mouse).